A 146-amino-acid polypeptide reads, in one-letter code: MKIMVINGPNLNLLGIREKEIYGAKDFNQVIDYIKEEGKELGLEINCFQSNIEGEIINFIHNAYFKKYDGIIINPGAYTHYSIAIYDALKGVEIPTVEVHLSNIHKREEFRHKSVTAPACIGQISGFGEYGYIMAMNALKKHIKSK.

The active-site Proton acceptor is tyrosine 22. 3 residues coordinate substrate: asparagine 74, histidine 80, and aspartate 87. Histidine 100 functions as the Proton donor in the catalytic mechanism. Substrate-binding positions include 101-102 and arginine 111; that span reads LS.

Belongs to the type-II 3-dehydroquinase family. Homododecamer.

It carries out the reaction 3-dehydroquinate = 3-dehydroshikimate + H2O. Its pathway is metabolic intermediate biosynthesis; chorismate biosynthesis; chorismate from D-erythrose 4-phosphate and phosphoenolpyruvate: step 3/7. In terms of biological role, catalyzes a trans-dehydration via an enolate intermediate. In Clostridium perfringens (strain SM101 / Type A), this protein is 3-dehydroquinate dehydratase.